A 391-amino-acid polypeptide reads, in one-letter code: MKKFALIVGIVALAIFSFLYIQLYRVQSAINEQLAQQNIAVQSINLSLFSPALSLENIKTTQFSAQKIEAKFSFLPLLYGNAALHSLNIQQLKLTQNTQNPANVSIEISPFSLKQLLSKKVILNGENHIRIEFNKPIYGKTKTFHFSFHKANLDFSTSESTPLQFVDASLNNQPIGYIETHTAHQQIVTYIKPQCDNDCLAVLKYQQIDNQSAVNFSGKYFPVQRLFALLNLPEMLSGHADFDLDFSFSSSSLIQGKLNFLAQNGEILGVNLLDMVAQYFPINYNNDLLQNKELNTRFEQFYLQLFLQQNQLIAEKIELKTPALLGQGKGIIDLNRMECNVDINLNSTDQRYQNLTLPINFFGNCNSPQYKINFTKKFRHQLIDAIKEKLR.

Residues 4 to 24 (FALIVGIVALAIFSFLYIQLY) form a helical membrane-spanning segment.

It localises to the membrane. This is an uncharacterized protein from Haemophilus influenzae (strain ATCC 51907 / DSM 11121 / KW20 / Rd).